The chain runs to 277 residues: Cell death abnormality protein 2 (277 aa).

The SH2 domain maps to 14 to 112 (FYFPGMSRED…EASLLSAYKK (99 aa)). The 61-residue stretch at 113–173 (PIIEVVVGTF…PANYVQVQSG (61 aa)) folds into the SH3 1 domain. Positions 179–217 (RISKGTSQSSIGSSGNGAERFSSTSTSSENAEAHPTLPT) are disordered. Positions 182-206 (KGTSQSSIGSSGNGAERFSSTSTSS) are enriched in low complexity. The region spanning 214–275 (TLPTTAKVTF…PFTYIRFNTA (62 aa)) is the SH3 2 domain.

This sequence belongs to the CRK family. Interacts with ced-5 (via C-terminus which contains a candidate SH3-binding, proline-rich region). Forms a ternary complex with ced-5 and ced-12. Interacts (via SH-2 domain) with src-1 (when activated and phosphorylated at 'Tyr-416').

Its function is as follows. Required for cell migration and engulfment of cell corpses but not for programmed cell death/apoptosis. Also has a role in the migration of the 2 gonadal distal tip cells (DTCs). The sequence is that of Cell death abnormality protein 2 from Caenorhabditis briggsae.